A 561-amino-acid chain; its full sequence is Arginine--tRNA ligase (561 aa).

A 'HIGH' region motif is present at residues 129 to 139 (ANPTGPLHVGH).

Belongs to the class-I aminoacyl-tRNA synthetase family. As to quaternary structure, monomer.

The protein resides in the cytoplasm. It catalyses the reaction tRNA(Arg) + L-arginine + ATP = L-arginyl-tRNA(Arg) + AMP + diphosphate. This Bordetella avium (strain 197N) protein is Arginine--tRNA ligase.